The sequence spans 962 residues: Nonsense-mediated mRNA decay factor SMG8 (962 aa).

A disordered region spans residues 634-661 (RSPEISSQIASSGLSSRSNSTSSGTSSA). A compositionally biased stretch (low complexity) spans 639–661 (SSQIASSGLSSRSNSTSSGTSSA).

The protein belongs to the SMG8 family.

Functionally, involved in nonsense-mediated decay (NMD) of mRNAs containing premature stop codons. Probable component of kinase complex containing nonC and recruited to stalled ribosomes. The protein is Nonsense-mediated mRNA decay factor SMG8 of Drosophila virilis (Fruit fly).